Reading from the N-terminus, the 270-residue chain is Mlc titration factor A (270 aa).

Residues H111, H148, H152, and E211 each contribute to the Zn(2+) site.

It belongs to the MtfA family. Interacts with Mlc. Requires Zn(2+) as cofactor.

Its subcellular location is the cytoplasm. Involved in the modulation of the activity of the glucose-phosphotransferase system (glucose-PTS). Interacts with the transcriptional repressor Mlc, preventing its interaction with DNA and leading to the modulation of expression of genes regulated by Mlc, including ptsG, which encodes the PTS system glucose-specific EIICB component. Its function is as follows. Shows zinc-dependent metallopeptidase activity. This is Mlc titration factor A from Yersinia pestis bv. Antiqua (strain Nepal516).